A 450-amino-acid chain; its full sequence is tRNA modification GTPase MnmE (450 aa).

R25, E86, and R126 together coordinate (6S)-5-formyl-5,6,7,8-tetrahydrofolate. The TrmE-type G domain occupies 221 to 373; sequence GLRVALVGRP…LVQALLERCG (153 aa). K(+) is bound at residue N231. GTP contacts are provided by residues 231 to 236, 250 to 256, 275 to 278, and 336 to 339; these read NVGKSS, TDLPGTT, DTAG, and NKAD. Position 235 (S235) interacts with Mg(2+). Residues T250, L252, and T255 each coordinate K(+). T256 is a binding site for Mg(2+). K450 lines the (6S)-5-formyl-5,6,7,8-tetrahydrofolate pocket.

This sequence belongs to the TRAFAC class TrmE-Era-EngA-EngB-Septin-like GTPase superfamily. TrmE GTPase family. Homodimer. Heterotetramer of two MnmE and two MnmG subunits. It depends on K(+) as a cofactor.

It is found in the cytoplasm. Exhibits a very high intrinsic GTPase hydrolysis rate. Involved in the addition of a carboxymethylaminomethyl (cmnm) group at the wobble position (U34) of certain tRNAs, forming tRNA-cmnm(5)s(2)U34. This is tRNA modification GTPase MnmE from Synechococcus sp. (strain CC9605).